The sequence spans 196 residues: Small ribosomal subunit protein uS4c (196 aa).

A disordered region spans residues 17–36 (ALPGLTRKTPKSGSNLKKKF). Residues 89 to 150 (MRLDNIVFRL…NQRSKRLVQN (62 aa)) enclose the S4 RNA-binding domain.

This sequence belongs to the universal ribosomal protein uS4 family. As to quaternary structure, part of the 30S ribosomal subunit. Contacts protein S5. The interaction surface between S4 and S5 is involved in control of translational fidelity.

The protein resides in the plastid. It is found in the chloroplast. One of the primary rRNA binding proteins, it binds directly to 16S rRNA where it nucleates assembly of the body of the 30S subunit. In terms of biological role, with S5 and S12 plays an important role in translational accuracy. This chain is Small ribosomal subunit protein uS4c (rps4), found in Tragus racemosus (Carrot grass).